We begin with the raw amino-acid sequence, 229 residues long: Cytidylate kinase (229 aa).

12–20 (GPSGSGKGT) provides a ligand contact to ATP.

The protein belongs to the cytidylate kinase family. Type 1 subfamily.

It localises to the cytoplasm. It catalyses the reaction CMP + ATP = CDP + ADP. The enzyme catalyses dCMP + ATP = dCDP + ADP. The chain is Cytidylate kinase from Pseudomonas fluorescens (strain Pf0-1).